The sequence spans 168 residues: Cell division inhibitor SulA (168 aa).

Residues 106 to 112 (ALLTGNY) are ftsZ binding. Positions 161–168 (KIHSYLYH) are lon protease binding.

Belongs to the SulA family. As to quaternary structure, interacts with FtsZ. In terms of processing, is rapidly cleaved and degraded by the Lon protease once DNA damage is repaired.

Component of the SOS system and an inhibitor of cell division. Accumulation of SulA causes rapid cessation of cell division and the appearance of long, non-septate filaments. In the presence of GTP, binds a polymerization-competent form of FtsZ in a 1:1 ratio, thus inhibiting FtsZ polymerization and therefore preventing it from participating in the assembly of the Z ring. This mechanism prevents the premature segregation of damaged DNA to daughter cells during cell division. The chain is Cell division inhibitor SulA from Yersinia pestis bv. Antiqua (strain Antiqua).